A 44-amino-acid chain; its full sequence is Pandinin-1 (44 aa).

As to expression, expressed by the venom gland.

The protein localises to the secreted. It is found in the target cell membrane. In terms of biological role, disrupts cell membranes through formation of pores. Strong antimicrobial activity against Gram-positive bacteria B.subtilis, S.epidermidis, E.faecalis and S.aureus. Less active against Gram-negative bacteria P.aeruginosa and E.coli. Has no antifungal or hemolytic activity. In Pandinus imperator (Emperor scorpion), this protein is Pandinin-1.